Here is a 105-residue protein sequence, read N- to C-terminus: Fluoride-specific ion channel FluC (105 aa).

3 consecutive transmembrane segments (helical) span residues 14 to 34 (FPLP…VFVV), 44 to 64 (LSPL…AFSL), and 79 to 99 (ALYV…GLWL). Na(+) is bound by residues Gly54 and Thr57.

It belongs to the fluoride channel Fluc/FEX (TC 1.A.43) family.

The protein localises to the cell inner membrane. It catalyses the reaction fluoride(in) = fluoride(out). Na(+) is not transported, but it plays an essential structural role and its presence is essential for fluoride channel function. Fluoride-specific ion channel. Important for reducing fluoride concentration in the cell, thus reducing its toxicity. This Jannaschia sp. (strain CCS1) protein is Fluoride-specific ion channel FluC.